Reading from the N-terminus, the 293-residue chain is Probable 2-(5''-triphosphoribosyl)-3'-dephosphocoenzyme-A synthase (293 aa).

It belongs to the CitG/MdcB family.

The enzyme catalyses 3'-dephospho-CoA + ATP = 2'-(5''-triphospho-alpha-D-ribosyl)-3'-dephospho-CoA + adenine. Functionally, involved in the formation of 2-(5''-phosphoribosyl)-3'-dephosphocoenzyme-A, the prosthetic group of the acyl-carrier protein of the malonate decarboxylase. The chain is Probable 2-(5''-triphosphoribosyl)-3'-dephosphocoenzyme-A synthase from Pseudomonas aeruginosa (strain ATCC 15692 / DSM 22644 / CIP 104116 / JCM 14847 / LMG 12228 / 1C / PRS 101 / PAO1).